Here is a 223-residue protein sequence, read N- to C-terminus: Putative germin-like protein subfamily 1 member 12 (223 aa).

An N-terminal signal peptide occupies residues 1 to 24; that stretch reads MNMKNLYLAILYLLAASTLPFAIA. Cysteines 34 and 51 form a disulfide. Residues 65 to 216 enclose the Cupin type-1 domain; sequence SGLDKARTTE…AFQLDPKVII (152 aa). Asn81 carries an N-linked (GlcNAc...) asparagine glycan. Positions 114, 116, and 121 each coordinate Mn(2+). Asn145 is a glycosylation site (N-linked (GlcNAc...) asparagine). His162 is a binding site for Mn(2+).

It belongs to the germin family. In terms of assembly, oligomer (believed to be a pentamer but probably hexamer).

It is found in the secreted. The protein resides in the extracellular space. The protein localises to the apoplast. May play a role in plant defense. Probably has no oxalate oxidase activity even if the active site is conserved. This Arabidopsis thaliana (Mouse-ear cress) protein is Putative germin-like protein subfamily 1 member 12.